The primary structure comprises 492 residues: Aspartate aminotransferase (492 aa).

A chloroplast-targeting transit peptide spans 1–66; sequence MMSASFKCPV…KGSCCLFNIR (66 aa). Gly-119, Trp-206, and Asn-256 together coordinate L-aspartate. At Lys-319 the chain carries N6-(pyridoxal phosphate)lysine. Arg-458 is a binding site for L-aspartate.

Belongs to the class-I pyridoxal-phosphate-dependent aminotransferase family. As to quaternary structure, homodimer. Pyridoxal 5'-phosphate serves as cofactor.

Its subcellular location is the plastid. The protein resides in the chloroplast. It carries out the reaction L-aspartate + 2-oxoglutarate = oxaloacetate + L-glutamate. Prokaryotic-type aspartate aminotransferase. Specific for aspartate and no activity with glutamine, asparagine, alanine, histidine, leucine, methionine, lysine, arginine, tryptophan, tyrosine, phenylalanine or kynurenine. The polypeptide is Aspartate aminotransferase (AAT) (Pinus pinaster (Maritime pine)).